The sequence spans 382 residues: Lipid-A-disaccharide synthase (382 aa).

Belongs to the LpxB family.

The catalysed reaction is 2-N,3-O-bis[(3R)-3-hydroxytetradecanoyl]-alpha-D-glucosaminyl 1-phosphate + UDP-2-N,3-O-bis[(3R)-3-hydroxytetradecanoyl]-alpha-D-glucosamine = lipid A disaccharide (E. coli) + UDP + H(+). It catalyses the reaction a lipid X + a UDP-2-N,3-O-bis[(3R)-3-hydroxyacyl]-alpha-D-glucosamine = a lipid A disaccharide + UDP + H(+). It functions in the pathway glycolipid biosynthesis; lipid IV(A) biosynthesis; lipid IV(A) from (3R)-3-hydroxytetradecanoyl-[acyl-carrier-protein] and UDP-N-acetyl-alpha-D-glucosamine: step 5/6. In terms of biological role, condensation of UDP-2,3-diacylglucosamine and 2,3-diacylglucosamine-1-phosphate to form lipid A disaccharide, a precursor of lipid A, a phosphorylated glycolipid that anchors the lipopolysaccharide to the outer membrane of the cell. The sequence is that of Lipid-A-disaccharide synthase from Escherichia coli O45:K1 (strain S88 / ExPEC).